An 859-amino-acid chain; its full sequence is Bifunctional uridylyltransferase/uridylyl-removing enzyme (859 aa).

A uridylyltransferase region spans residues 1 to 325 (MSAHAAPSPE…PATSGITRVL (325 aa)). Residues 326-682 (SHDRFVEKQG…ARPSPIGDAL (357 aa)) form a uridylyl-removing region. Residues 444–566 (VDQHILMVLR…VGNERYLTAL (123 aa)) form the HD domain. ACT domains follow at residues 683 to 762 (QVLV…PEPS) and 791 to 859 (ILSV…AIAV).

Belongs to the GlnD family. It depends on Mg(2+) as a cofactor.

The enzyme catalyses [protein-PII]-L-tyrosine + UTP = [protein-PII]-uridylyl-L-tyrosine + diphosphate. It catalyses the reaction [protein-PII]-uridylyl-L-tyrosine + H2O = [protein-PII]-L-tyrosine + UMP + H(+). Its activity is regulated as follows. Uridylyltransferase (UTase) activity is inhibited by glutamine, while glutamine activates uridylyl-removing (UR) activity. Functionally, modifies, by uridylylation and deuridylylation, the PII regulatory proteins (GlnB and homologs), in response to the nitrogen status of the cell that GlnD senses through the glutamine level. Under low glutamine levels, catalyzes the conversion of the PII proteins and UTP to PII-UMP and PPi, while under higher glutamine levels, GlnD hydrolyzes PII-UMP to PII and UMP (deuridylylation). Thus, controls uridylylation state and activity of the PII proteins, and plays an important role in the regulation of nitrogen fixation and metabolism. In Burkholderia vietnamiensis (strain G4 / LMG 22486) (Burkholderia cepacia (strain R1808)), this protein is Bifunctional uridylyltransferase/uridylyl-removing enzyme.